Consider the following 294-residue polypeptide: Cytidine deaminase (294 aa).

CMP/dCMP-type deaminase domains follow at residues 48 to 168 and 186 to 294; these read DEDA…FGPK and LTGD…VLLG. Position 89–91 (89–91) interacts with substrate; the sequence is NME. A Zn(2+)-binding site is contributed by histidine 102. Residue glutamate 104 is the Proton donor of the active site. The Zn(2+) site is built by cysteine 129 and cysteine 132.

It belongs to the cytidine and deoxycytidylate deaminase family. In terms of assembly, homodimer. Requires Zn(2+) as cofactor.

The catalysed reaction is cytidine + H2O + H(+) = uridine + NH4(+). It carries out the reaction 2'-deoxycytidine + H2O + H(+) = 2'-deoxyuridine + NH4(+). This enzyme scavenges exogenous and endogenous cytidine and 2'-deoxycytidine for UMP synthesis. This is Cytidine deaminase from Escherichia fergusonii (strain ATCC 35469 / DSM 13698 / CCUG 18766 / IAM 14443 / JCM 21226 / LMG 7866 / NBRC 102419 / NCTC 12128 / CDC 0568-73).